Reading from the N-terminus, the 196-residue chain is Early light-induced protein, chloroplastic (196 aa).

A chloroplast-targeting transit peptide spans Met-1–Met-48. Basic and acidic residues predominate over residues Ser-47–Ser-57. The segment at Ser-47–Pro-81 is disordered. The next 3 helical transmembrane spans lie at Leu-105–Ser-125, Gly-132–Phe-152, and Ile-176–Val-196.

It belongs to the ELIP/psbS family.

The protein resides in the plastid. Its subcellular location is the chloroplast membrane. Its function is as follows. Probably involved in the integration of pigments into the mature pigment-protein complexes. In Pisum sativum (Garden pea), this protein is Early light-induced protein, chloroplastic.